Consider the following 667-residue polypeptide: MIVDYQDVDTVISGVDYFSSYNGNIENENCKLSDLFEQNVNNQFFQPNNTSLPPPTNQQPQPQPQQWDLMEDENCNSSFENSPQQPTSPLLISSQTSYPSDLSSNSSISHSPIENQLLDNNLDINNYLNKINIFNNHFQNSDLINTTFFNQFENNNYINNNNNKENNSYFYNNNVNIPNNNNLNINNNNNNNNNNNNNNNNNNNNNNNNNNNNNNNNNNNNNNNNNKNTVYNNVNIPNNNNFNLNLSNNNNNLNLTNNNNNKNSVNNNNVNISNNNNNNNFNVNLSNNNVNISNIPISNYYQQAAQTIFDDNFQTIQFNKEYPLNEHISQSTNKRMKISHHSHSLSNNNENSLSQPYFNNNNNNNNENENVYNIVNEQNPTFNPNQSNTHQQQEEQYQQHEEGQEEKEHEEEEKYQKQKPKIEIEELININLIKEKIEKLKNKFENENVICSEFLEKCFKFSSFPIFPIVESKLKFYQFEIDFSFSSYIESQKLDKIGLPSFKRPVQFLNTFYTQEIVNLDQELITRSQPIHDFIECISLIRPLLSLSSSSSSSSSSSSPSSSNELNSKLNMVQSVFNVVKSYQKTNTANVILQVLKKYAKEFKSRRILSEQQETNMNLWFDAHVNNPYPEEDEKVILGAVNNLSKSQIDNWFGNKRMRDKSNKKSL.

4 disordered regions span residues 44–108, 179–232, 249–268, and 331–418; these read FFQP…NSSI, NNNN…TVYN, NNNN…VNNN, and STNK…YQKQ. Residues 52 to 63 show a composition bias toward pro residues; sequence LPPPTNQQPQPQ. A compositionally biased stretch (polar residues) spans 75-96; the sequence is CNSSFENSPQQPTSPLLISSQT. Residues 97–108 are compositionally biased toward low complexity; the sequence is SYPSDLSSNSSI. Residues 334–343 show a composition bias toward basic residues; that stretch reads KRMKISHHSH. A compositionally biased stretch (low complexity) spans 344–379; sequence SLSNNNENSLSQPYFNNNNNNNNENENVYNIVNEQN. A compositionally biased stretch (polar residues) spans 380-390; it reads PTFNPNQSNTH. Residues 386–454 are a coiled coil; the sequence is QSNTHQQQEE…ENENVICSEF (69 aa). Positions 602 to 664 form a DNA-binding region, homeobox; sequence EFKSRRILSE…NKRMRDKSNK (63 aa).

The protein localises to the nucleus. Putative transcription factor. The chain is Homeobox protein 3 (hbx3) from Dictyostelium discoideum (Social amoeba).